The chain runs to 320 residues: Ferrochelatase (320 aa).

Fe cation-binding residues include histidine 194 and glutamate 275.

Belongs to the ferrochelatase family.

Its subcellular location is the cytoplasm. It catalyses the reaction heme b + 2 H(+) = protoporphyrin IX + Fe(2+). It participates in porphyrin-containing compound metabolism; protoheme biosynthesis; protoheme from protoporphyrin-IX: step 1/1. Its function is as follows. Catalyzes the ferrous insertion into protoporphyrin IX. This is Ferrochelatase from Yersinia pestis bv. Antiqua (strain Antiqua).